The primary structure comprises 208 residues: Uracil phosphoribosyltransferase (208 aa).

Residues Arg78, Arg103, and 130–138 (DPMLATGGS) each bind 5-phospho-alpha-D-ribose 1-diphosphate. Uracil-binding positions include Ile193 and 198-200 (GDA). Asp199 provides a ligand contact to 5-phospho-alpha-D-ribose 1-diphosphate.

It belongs to the UPRTase family. Mg(2+) is required as a cofactor.

It carries out the reaction UMP + diphosphate = 5-phospho-alpha-D-ribose 1-diphosphate + uracil. It functions in the pathway pyrimidine metabolism; UMP biosynthesis via salvage pathway; UMP from uracil: step 1/1. Allosterically activated by GTP. In terms of biological role, catalyzes the conversion of uracil and 5-phospho-alpha-D-ribose 1-diphosphate (PRPP) to UMP and diphosphate. This is Uracil phosphoribosyltransferase from Haemophilus influenzae (strain PittEE).